The sequence spans 736 residues: 1,4-alpha-glucan branching enzyme GlgB 2 (736 aa).

Aspartate 415 functions as the Nucleophile in the catalytic mechanism. Glutamate 468 serves as the catalytic Proton donor.

It belongs to the glycosyl hydrolase 13 family. GlgB subfamily. In terms of assembly, monomer.

The enzyme catalyses Transfers a segment of a (1-&gt;4)-alpha-D-glucan chain to a primary hydroxy group in a similar glucan chain.. Its pathway is glycan biosynthesis; glycogen biosynthesis. Catalyzes the formation of the alpha-1,6-glucosidic linkages in glycogen by scission of a 1,4-alpha-linked oligosaccharide from growing alpha-1,4-glucan chains and the subsequent attachment of the oligosaccharide to the alpha-1,6 position. The protein is 1,4-alpha-glucan branching enzyme GlgB 2 of Rhizobium johnstonii (strain DSM 114642 / LMG 32736 / 3841) (Rhizobium leguminosarum bv. viciae).